We begin with the raw amino-acid sequence, 249 residues long: Methyl-coenzyme M reductase I subunit gamma (249 aa).

Residue arginine 120 coordinates coenzyme M.

The protein belongs to the methyl-coenzyme M reductase gamma subunit family. MCR is a hexamer of two alpha, two beta, and two gamma chains, forming a dimer of heterotrimers. Coenzyme F430 is required as a cofactor.

Its subcellular location is the cytoplasm. The catalysed reaction is coenzyme B + methyl-coenzyme M = methane + coenzyme M-coenzyme B heterodisulfide. It participates in one-carbon metabolism; methyl-coenzyme M reduction; methane from methyl-coenzyme M: step 1/1. In terms of biological role, component of the methyl-coenzyme M reductase (MCR) I that catalyzes the reductive cleavage of methyl-coenzyme M (CoM-S-CH3 or 2-(methylthio)ethanesulfonate) using coenzyme B (CoB or 7-mercaptoheptanoylthreonine phosphate) as reductant which results in the production of methane and the mixed heterodisulfide of CoB and CoM (CoM-S-S-CoB). This is the final step in methanogenesis. This is Methyl-coenzyme M reductase I subunit gamma (mcrG) from Methanothermobacter thermautotrophicus (strain ATCC 29096 / DSM 1053 / JCM 10044 / NBRC 100330 / Delta H) (Methanobacterium thermoautotrophicum).